A 195-amino-acid chain; its full sequence is MSDQFVSQSGRTLSEFISRFQLQQPQPGSFSANSHHAAVLIPIVCRPEPTLLLTRRSDHLRKHAGQVAFPGGKADPQDSSLIETALREAEEEVAIPASAVHVLGQLAPLDSSSGFQVTPIVGLVPDNITFHGNEEEVAGLFEIPLYEALRLSRYYWLDIHRGGVNHRVYLSWYESQFIWGLTAAIIRRLAQQVNI.

The region spanning 34-165 (SHHAAVLIPI…WLDIHRGGVN (132 aa)) is the Nudix hydrolase domain. A Nudix box motif is present at residues 72-94 (GKADPQDSSLIETALREAEEEVA). Residues Glu88 and Glu92 each coordinate Mg(2+).

It belongs to the Nudix hydrolase family. PCD1 subfamily. The cofactor is Mn(2+). Requires Mg(2+) as cofactor.

Its function is as follows. Probably mediates the hydrolysis of some nucleoside diphosphate derivatives. This is an uncharacterized protein from Yersinia enterocolitica serotype O:8 / biotype 1B (strain NCTC 13174 / 8081).